A 178-amino-acid polypeptide reads, in one-letter code: Endothelin-2 (178 aa).

The first 24 residues, 1–24 (MVAVPTAWCSVALALLLALQEGKG), serve as a signal peptide directing secretion. Positions 25-46 (QVAAAPDHPAPSPRARGSHLRP) are excised as a propeptide. Disulfide bonds link Cys-49–Cys-63 and Cys-51–Cys-59. Residues 70–178 (VNTPGQTAPY…RPMYPRRRKT (109 aa)) constitute a propeptide that is removed on maturation. An endothelin-like region spans residues 96 to 111 (CECSSSGDPACATFCH). The segment at 158-178 (ARQHQEAEREPRPMYPRRRKT) is disordered. Residues 160–169 (QHQEAEREPR) are compositionally biased toward basic and acidic residues.

It belongs to the endothelin/sarafotoxin family.

Its subcellular location is the secreted. Endothelins are endothelium-derived vasoconstrictor peptides. The protein is Endothelin-2 (EDN2) of Mustela putorius furo (European domestic ferret).